The sequence spans 199 residues: Shikimate kinase (199 aa).

32 to 37 is a binding site for ATP; it reads GSGKTS. Thr36 contacts Mg(2+). Residues Asp54, Arg78, and Gly100 each coordinate substrate. Arg138 provides a ligand contact to ATP. Arg157 is a binding site for substrate.

Belongs to the shikimate kinase family. Monomer. Mg(2+) serves as cofactor.

It localises to the cytoplasm. The enzyme catalyses shikimate + ATP = 3-phosphoshikimate + ADP + H(+). It functions in the pathway metabolic intermediate biosynthesis; chorismate biosynthesis; chorismate from D-erythrose 4-phosphate and phosphoenolpyruvate: step 5/7. Functionally, catalyzes the specific phosphorylation of the 3-hydroxyl group of shikimic acid using ATP as a cosubstrate. The polypeptide is Shikimate kinase (Synechococcus sp. (strain CC9605)).